Consider the following 500-residue polypeptide: POU domain, class 3, transcription factor 3 (500 aa).

A compositionally biased stretch (gly residues) spans 32–52 (GGGGGGGGGGGGAGGGGGGMQ). Disordered regions lie at residues 32–63 (GGGG…SGAY), 122–190 (WSGS…WGAA), 231–319 (NGML…TPTS), and 461–500 (EKRM…TSVQ). 2 stretches are compositionally biased toward pro residues: residues 134 to 146 (QQPP…PPQG) and 171 to 181 (HLGPPPPPPHQ). Residues 241 to 251 (GGGGGGAGGGA) show a composition bias toward gly residues. Residues 270 to 287 (HHHHHHHHAHPHPPHPHH) are compositionally biased toward basic residues. A compositionally biased stretch (gly residues) spans 293–303 (HHGGGGGGAGP). Positions 314-388 (EDTPTSDDLE…LLNKWLEEAD (75 aa)) constitute a POU-specific domain. The segment at residues 406 to 465 (KRKKRTSIEVSVKGALESHFLKCPKPSAQEITNLADSLQLEKEVVRVWFCNRRQKEKRMT) is a DNA-binding region (homeobox). Positions 468 to 486 (GIQQQTPDDVYSQVGTVSA) are enriched in polar residues.

This sequence belongs to the POU transcription factor family. Class-3 subfamily. In terms of assembly, homodimer. In terms of tissue distribution, brain.

Its subcellular location is the nucleus. Functionally, transcription factor that acts synergistically with SOX11 and SOX4. Plays a role in neuronal development. Is implicated in an enhancer activity at the embryonic met-mesencephalic junction; the enhancer element contains the octamer motif (5'-ATTTGCAT-3'). In Homo sapiens (Human), this protein is POU domain, class 3, transcription factor 3.